The chain runs to 590 residues: UvrABC system protein C (590 aa).

In terms of domain architecture, GIY-YIG spans 14-91; the sequence is DQPGCYLMKD…IKKYDPKYNV (78 aa). The UVR domain occupies 196-231; the sequence is NEIKKELEAKMAEAAEKLEFERAKEFRDQLAHIEST.

The protein belongs to the UvrC family. In terms of assembly, interacts with UvrB in an incision complex.

Its subcellular location is the cytoplasm. In terms of biological role, the UvrABC repair system catalyzes the recognition and processing of DNA lesions. UvrC both incises the 5' and 3' sides of the lesion. The N-terminal half is responsible for the 3' incision and the C-terminal half is responsible for the 5' incision. This chain is UvrABC system protein C, found in Bacillus velezensis (strain DSM 23117 / BGSC 10A6 / LMG 26770 / FZB42) (Bacillus amyloliquefaciens subsp. plantarum).